A 429-amino-acid chain; its full sequence is GTPase Obg (429 aa).

The Obg domain maps to 1-158; sequence MFVDQVKIYV…RNVQLELKVL (158 aa). The interval 124 to 145 is disordered; the sequence is RGNKRFATPANPAPELSENGEP. One can recognise an OBG-type G domain in the interval 159-329; the sequence is ADVGLVGFPS…LLLAIADKLE (171 aa). GTP-binding positions include 165–172, 190–194, 212–215, 282–285, and 310–312; these read GFPSVGKS, FTTIV, DLPG, NKMD, and SAV. Residues serine 172 and threonine 192 each coordinate Mg(2+). One can recognise an OCT domain in the interval 351–429; that stretch reads KYIAEEPDFE…LLDYEFEFMD (79 aa).

Belongs to the TRAFAC class OBG-HflX-like GTPase superfamily. OBG GTPase family. Monomer. Requires Mg(2+) as cofactor.

The protein resides in the cytoplasm. Its function is as follows. An essential GTPase which binds GTP, GDP and possibly (p)ppGpp with moderate affinity, with high nucleotide exchange rates and a fairly low GTP hydrolysis rate. Plays a role in control of the cell cycle, stress response, ribosome biogenesis and in those bacteria that undergo differentiation, in morphogenesis control. In Listeria welshimeri serovar 6b (strain ATCC 35897 / DSM 20650 / CCUG 15529 / CIP 8149 / NCTC 11857 / SLCC 5334 / V8), this protein is GTPase Obg.